We begin with the raw amino-acid sequence, 187 residues long: UPF0398 protein LJ_1195 (187 aa).

Belongs to the UPF0398 family.

This Lactobacillus johnsonii (strain CNCM I-12250 / La1 / NCC 533) protein is UPF0398 protein LJ_1195.